The following is a 169-amino-acid chain: ALK and LTK ligand 2a (169 aa).

An N-terminal signal peptide occupies residues 1–25 (MRALRAPVLVMGLVLLICTAAQSDA). The disordered stretch occupies residues 45-68 (ENSADDESAQKTESAPEPKDTHHL). The span at 52–67 (SAQKTESAPEPKDTHH) shows a compositional bias: basic and acidic residues. Intrachain disulfides connect cysteine 130-cysteine 166 and cysteine 144-cysteine 153.

This sequence belongs to the ALKAL family. Homodimer. Expressed at high level in the notochord and iridophore stripes of the trunk, as well as in the eye and swim bladder.

Its subcellular location is the secreted. It is found in the cell membrane. In terms of biological role, cytokine that acts as a physiological ligand for receptor tyrosine kinases LTK and ALK. Required for neural crest cell differentiation and iridophore development during embryonic iridophore development and adult stripe development by acting as a receptor for LTK. The sequence is that of ALK and LTK ligand 2a from Danio rerio (Zebrafish).